The chain runs to 655 residues: Sphingomyelin phosphodiesterase 3 (655 aa).

At 1 to 10 (MVLYTTPFPN) the chain is on the cytoplasmic side. The segment at residues 11-31 (SCLSALHCVSWALIFPCYWLV) is an intramembrane region (helical). Over 32–64 (DRLAASFIPTTYEKRQRADDPCCLQLLCTALFT) the chain is Cytoplasmic. Residues C53, C54, and C59 are each lipidated (S-palmitoyl cysteine). Positions 65-85 (PIYLALLVASLPFAFLGFLFW) form an intramembrane region, helical. Over 86-655 (SPLQSARRPY…LMVSSGEEEA (570 aa)) the chain is Cytoplasmic. At S178 the chain carries Phosphoserine. A disordered region spans residues 210-319 (VEYKGDGGRH…DTSASGEPGA (110 aa)). Composition is skewed to basic and acidic residues over residues 212–222 (YKGDGGRHPGD) and 248–257 (GGEEGGRPPE). Residues 279–299 (TPNHNQQDGDSGSLGSPSASR) show a composition bias toward polar residues. The residue at position 291 (S291) is a Phosphoserine. E364 lines the Mg(2+) pocket. 2 S-palmitoyl cysteine lipidation sites follow: C397 and C398. The Proton acceptor role is filled by H639.

The protein belongs to the neutral sphingomyelinase family. The cofactor is Mg(2+). In terms of processing, palmitoylated, palmitoylation-deficient proteins are targeted for lysosomal degradation. In terms of tissue distribution, predominantly expressed in brain.

It localises to the golgi apparatus membrane. The protein localises to the cell membrane. It carries out the reaction a sphingomyelin + H2O = phosphocholine + an N-acylsphing-4-enine + H(+). It catalyses the reaction N-(15Z-tetracosenoyl)sphing-4-enine-1-phosphocholine + H2O = N-(15Z-tetracosenoyl)-sphing-4-enine + phosphocholine + H(+). The enzyme catalyses N-(tetracosanoyl)-sphing-4-enine-1-phosphocholine + H2O = N-tetracosanoyl-sphing-4-enine + phosphocholine + H(+). The catalysed reaction is an N-(acyl)-sphingosylphosphocholine + H2O = an N-acyl-sphingoid base + phosphocholine + H(+). It carries out the reaction 1-hexadecanoyl-sn-glycero-3-phosphocholine + H2O = 1-hexadecanoyl-sn-glycerol + phosphocholine + H(+). It catalyses the reaction 1-O-octadecyl-sn-glycero-3-phosphocholine + H2O = 1-O-octadecyl-sn-glycerol + phosphocholine + H(+). The enzyme catalyses a sphingosylphosphocholine + H2O = a sphingoid base + phosphocholine + H(+). The catalysed reaction is N-(hexadecanoyl)-sphing-4-enine-1-phosphocholine + H2O = N-hexadecanoylsphing-4-enine + phosphocholine + H(+). It functions in the pathway lipid metabolism; sphingolipid metabolism. With respect to regulation, inhibited by nSMase inhibitor GW4869. Binding of anionic phospholipids (APLs) such as phosphatidylserine (PS) and phosphatidic acid (PA) increases enzymatic activity. In terms of biological role, catalyzes the hydrolysis of sphingomyelin to form ceramide and phosphocholine. Ceramide mediates numerous cellular functions, such as apoptosis and growth arrest, and is capable of regulating these 2 cellular events independently. Also hydrolyzes sphingosylphosphocholine. Regulates the cell cycle by acting as a growth suppressor in confluent cells. Probably acts as a regulator of postnatal development and participates in bone and dentin mineralization. Binds to anionic phospholipids (APLs) such as phosphatidylserine (PS) and phosphatidic acid (PA) that modulate enzymatic activity and subcellular location. May be involved in IL-1-beta-induced JNK activation in hepatocytes. May act as a mediator in transcriptional regulation of NOS2/iNOS via the NF-kappa-B activation under inflammatory conditions. This Homo sapiens (Human) protein is Sphingomyelin phosphodiesterase 3.